Reading from the N-terminus, the 522-residue chain is 2-isopropylmalate synthase (522 aa).

The Pyruvate carboxyltransferase domain occupies 5 to 267 (VIIFDTTLRD…ETGINAKEIH (263 aa)). Aspartate 14, histidine 202, histidine 204, and asparagine 238 together coordinate Mn(2+). A regulatory domain region spans residues 392 to 522 (QLQQLVVQSD…MHKNRELGGV (131 aa)).

Belongs to the alpha-IPM synthase/homocitrate synthase family. LeuA type 1 subfamily. As to quaternary structure, homodimer. The cofactor is Mn(2+).

It localises to the cytoplasm. It carries out the reaction 3-methyl-2-oxobutanoate + acetyl-CoA + H2O = (2S)-2-isopropylmalate + CoA + H(+). It participates in amino-acid biosynthesis; L-leucine biosynthesis; L-leucine from 3-methyl-2-oxobutanoate: step 1/4. Functionally, catalyzes the condensation of the acetyl group of acetyl-CoA with 3-methyl-2-oxobutanoate (2-ketoisovalerate) to form 3-carboxy-3-hydroxy-4-methylpentanoate (2-isopropylmalate). The chain is 2-isopropylmalate synthase from Shewanella sp. (strain MR-4).